We begin with the raw amino-acid sequence, 215 residues long: MTPFTRHTGLVAPLDRANVDTDQIIPKQFLKSIKRTGFGPNLFDEWRYLDIGEPGRDNSTRPLNPEFVLNFPRYQGASVLLARENFGCGSSREHAPWALDEYGFRTVIAPSFADIFYNNSFKNGLLPIVLAEAQVDALFEQCLTTEGYQLTVDLAAQRVRRPDGVEYGFDIDAFRKHCLLNGLDDIGLTLQDADAIGRFEQGHRARQPWLFGALQ.

Belongs to the LeuD family. LeuD type 1 subfamily. Heterodimer of LeuC and LeuD.

The enzyme catalyses (2R,3S)-3-isopropylmalate = (2S)-2-isopropylmalate. It participates in amino-acid biosynthesis; L-leucine biosynthesis; L-leucine from 3-methyl-2-oxobutanoate: step 2/4. In terms of biological role, catalyzes the isomerization between 2-isopropylmalate and 3-isopropylmalate, via the formation of 2-isopropylmaleate. The chain is 3-isopropylmalate dehydratase small subunit from Xanthomonas axonopodis pv. citri (strain 306).